A 229-amino-acid chain; its full sequence is 2-C-methyl-D-erythritol 4-phosphate cytidylyltransferase (229 aa).

This sequence belongs to the IspD/TarI cytidylyltransferase family. IspD subfamily.

It catalyses the reaction 2-C-methyl-D-erythritol 4-phosphate + CTP + H(+) = 4-CDP-2-C-methyl-D-erythritol + diphosphate. It functions in the pathway isoprenoid biosynthesis; isopentenyl diphosphate biosynthesis via DXP pathway; isopentenyl diphosphate from 1-deoxy-D-xylulose 5-phosphate: step 2/6. Catalyzes the formation of 4-diphosphocytidyl-2-C-methyl-D-erythritol from CTP and 2-C-methyl-D-erythritol 4-phosphate (MEP). This is 2-C-methyl-D-erythritol 4-phosphate cytidylyltransferase from Neisseria gonorrhoeae (strain NCCP11945).